The chain runs to 466 residues: Glutamate--tRNA ligase 1 (466 aa).

A 'HIGH' region motif is present at residues 10 to 20 (PSPTGLIHLGN). 4 residues coordinate Zn(2+): cysteine 103, cysteine 105, cysteine 130, and histidine 132. The short motif at 247–251 (PLSKR) is the 'KMSKS' region element. Lysine 250 serves as a coordination point for ATP.

This sequence belongs to the class-I aminoacyl-tRNA synthetase family. Glutamate--tRNA ligase type 1 subfamily. As to quaternary structure, monomer. Zn(2+) serves as cofactor.

It is found in the cytoplasm. It carries out the reaction tRNA(Glu) + L-glutamate + ATP = L-glutamyl-tRNA(Glu) + AMP + diphosphate. Catalyzes the attachment of glutamate to tRNA(Glu) in a two-step reaction: glutamate is first activated by ATP to form Glu-AMP and then transferred to the acceptor end of tRNA(Glu). The protein is Glutamate--tRNA ligase 1 of Methylococcus capsulatus (strain ATCC 33009 / NCIMB 11132 / Bath).